The following is a 167-amino-acid chain: tRNA-specific adenosine deaminase (167 aa).

Residues 6 to 117 (FSHEYWMRHA…DAKTGAAGSL (112 aa)) form the CMP/dCMP-type deaminase domain. His-57 lines the Zn(2+) pocket. Residue Glu-59 is the Proton donor of the active site. Zn(2+)-binding residues include Cys-87 and Cys-90.

Belongs to the cytidine and deoxycytidylate deaminase family. In terms of assembly, homodimer. Zn(2+) is required as a cofactor.

The catalysed reaction is adenosine(34) in tRNA + H2O + H(+) = inosine(34) in tRNA + NH4(+). Its function is as follows. Catalyzes the deamination of adenosine to inosine at the wobble position 34 of tRNA(Arg2). Essential for cell viability. This is tRNA-specific adenosine deaminase from Escherichia coli (strain K12).